Reading from the N-terminus, the 508-residue chain is Photosystem II CP47 reaction center protein (508 aa).

The next 6 membrane-spanning stretches (helical) occupy residues 21–36, 101–115, 140–156, 203–218, 237–252, and 457–472; these read AVHI…WAGS, IVFS…IWHW, GIHL…FGAF, IAAG…FHLS, VLSS…AFVV, and SFAL…HGAR.

The protein belongs to the PsbB/PsbC family. PsbB subfamily. In terms of assembly, PSII is composed of 1 copy each of membrane proteins PsbA, PsbB, PsbC, PsbD, PsbE, PsbF, PsbH, PsbI, PsbJ, PsbK, PsbL, PsbM, PsbT, PsbX, PsbY, PsbZ, Psb30/Ycf12, at least 3 peripheral proteins of the oxygen-evolving complex and a large number of cofactors. It forms dimeric complexes. The cofactor is Binds multiple chlorophylls. PSII binds additional chlorophylls, carotenoids and specific lipids..

The protein localises to the plastid. It is found in the chloroplast thylakoid membrane. Functionally, one of the components of the core complex of photosystem II (PSII). It binds chlorophyll and helps catalyze the primary light-induced photochemical processes of PSII. PSII is a light-driven water:plastoquinone oxidoreductase, using light energy to abstract electrons from H(2)O, generating O(2) and a proton gradient subsequently used for ATP formation. This is Photosystem II CP47 reaction center protein from Nandina domestica (Heavenly bamboo).